Reading from the N-terminus, the 96-residue chain is Co-chaperonin GroES (96 aa).

This sequence belongs to the GroES chaperonin family. In terms of assembly, heptamer of 7 subunits arranged in a ring. Interacts with the chaperonin GroEL.

The protein localises to the cytoplasm. Together with the chaperonin GroEL, plays an essential role in assisting protein folding. The GroEL-GroES system forms a nano-cage that allows encapsulation of the non-native substrate proteins and provides a physical environment optimized to promote and accelerate protein folding. GroES binds to the apical surface of the GroEL ring, thereby capping the opening of the GroEL channel. In Leptospira borgpetersenii serovar Hardjo-bovis (strain JB197), this protein is Co-chaperonin GroES.